We begin with the raw amino-acid sequence, 282 residues long: Glutamate racemase (282 aa).

Substrate is bound by residues 13–14 and 45–46; these read DS and YG. The active-site Proton donor/acceptor is C76. 77–78 is a substrate binding site; it reads NT. Residue C186 is the Proton donor/acceptor of the active site. Residue 187-188 participates in substrate binding; the sequence is TH.

This sequence belongs to the aspartate/glutamate racemases family.

It carries out the reaction L-glutamate = D-glutamate. Its pathway is cell wall biogenesis; peptidoglycan biosynthesis. Functionally, provides the (R)-glutamate required for cell wall biosynthesis. In Ralstonia pickettii (strain 12J), this protein is Glutamate racemase.